A 464-amino-acid polypeptide reads, in one-letter code: 3-isopropylmalate dehydratase large subunit (464 aa).

[4Fe-4S] cluster contacts are provided by C337, C397, and C400.

This sequence belongs to the aconitase/IPM isomerase family. LeuC type 1 subfamily. As to quaternary structure, heterodimer of LeuC and LeuD. [4Fe-4S] cluster is required as a cofactor.

The catalysed reaction is (2R,3S)-3-isopropylmalate = (2S)-2-isopropylmalate. Its pathway is amino-acid biosynthesis; L-leucine biosynthesis; L-leucine from 3-methyl-2-oxobutanoate: step 2/4. Catalyzes the isomerization between 2-isopropylmalate and 3-isopropylmalate, via the formation of 2-isopropylmaleate. This chain is 3-isopropylmalate dehydratase large subunit, found in Bacillus cereus (strain 03BB102).